Consider the following 388-residue polypeptide: Chaperone protein DnaJ (388 aa).

The 65-residue stretch at 5–69 (DYYDVLGVDK…QKRAQYDQFG (65 aa)) folds into the J domain. Residues 145-227 (GKKTDITYTR…CHGQGTVDKK (83 aa)) form a CR-type zinc finger. Zn(2+)-binding residues include Cys-158, Cys-161, Cys-175, Cys-178, Cys-201, Cys-204, Cys-215, and Cys-218. CXXCXGXG motif repeat units lie at residues 158–165 (CPTCDGSG), 175–182 (CDKCHGSG), 201–208 (CDKCGGRG), and 215–222 (CQTCHGQG).

The protein belongs to the DnaJ family. As to quaternary structure, homodimer. The cofactor is Zn(2+).

The protein resides in the cytoplasm. Functionally, participates actively in the response to hyperosmotic and heat shock by preventing the aggregation of stress-denatured proteins and by disaggregating proteins, also in an autonomous, DnaK-independent fashion. Unfolded proteins bind initially to DnaJ; upon interaction with the DnaJ-bound protein, DnaK hydrolyzes its bound ATP, resulting in the formation of a stable complex. GrpE releases ADP from DnaK; ATP binding to DnaK triggers the release of the substrate protein, thus completing the reaction cycle. Several rounds of ATP-dependent interactions between DnaJ, DnaK and GrpE are required for fully efficient folding. Also involved, together with DnaK and GrpE, in the DNA replication of plasmids through activation of initiation proteins. This Lactobacillus johnsonii (strain CNCM I-12250 / La1 / NCC 533) protein is Chaperone protein DnaJ.